We begin with the raw amino-acid sequence, 581 residues long: Rhodanese-like domain-containing protein 6 (581 aa).

The Rhodanese domain occupies 158–258 (ENKELVLLDA…YLEQFPSGGF (101 aa)). Cys-216 serves as the catalytic Cysteine persulfide intermediate.

In Arabidopsis thaliana (Mouse-ear cress), this protein is Rhodanese-like domain-containing protein 6 (STR6).